A 153-amino-acid chain; its full sequence is Ribonuclease H (153 aa).

The RNase H type-1 domain occupies 1 to 141 (MKHIEIYTDG…CDVLARDAAS (141 aa)). Mg(2+)-binding residues include Asp-9, Glu-47, Asp-69, and Asp-133.

Belongs to the RNase H family. In terms of assembly, monomer. Requires Mg(2+) as cofactor.

It localises to the cytoplasm. It carries out the reaction Endonucleolytic cleavage to 5'-phosphomonoester.. Endonuclease that specifically degrades the RNA of RNA-DNA hybrids. The sequence is that of Ribonuclease H from Pseudoalteromonas atlantica (strain T6c / ATCC BAA-1087).